Reading from the N-terminus, the 282-residue chain is Pantothenate synthetase (282 aa).

30–37 is a binding site for ATP; it reads MGNLHEGH. The active-site Proton donor is the histidine 37. Glutamine 61 is a (R)-pantoate binding site. Glutamine 61 is a binding site for beta-alanine. ATP is bound at residue 148 to 151; that stretch reads GQKD. Glutamine 154 lines the (R)-pantoate pocket. Residues valine 177 and 185–188 each bind ATP; that span reads LSSR.

This sequence belongs to the pantothenate synthetase family. Homodimer.

It localises to the cytoplasm. It catalyses the reaction (R)-pantoate + beta-alanine + ATP = (R)-pantothenate + AMP + diphosphate + H(+). The protein operates within cofactor biosynthesis; (R)-pantothenate biosynthesis; (R)-pantothenate from (R)-pantoate and beta-alanine: step 1/1. Functionally, catalyzes the condensation of pantoate with beta-alanine in an ATP-dependent reaction via a pantoyl-adenylate intermediate. In Acinetobacter baumannii (strain AB0057), this protein is Pantothenate synthetase.